Consider the following 880-residue polypeptide: EP-cadherin (880 aa).

Residues Met1–Ala28 form the signal peptide. Positions Asp29–Arg155 are excised as a propeptide. Residue Asn61 is glycosylated (N-linked (GlcNAc...) asparagine). Cadherin domains are found at residues Asp156 to Phe263, Thr264 to Phe376, Asp377 to Phe487, Val488 to Pro593, and Val594 to Leu704. Residues Asp156–Asp703 are Extracellular-facing. Residues Thr343, Thr382, and Thr400 are each glycosylated (O-linked (GalNAc...) threonine). Asn425 carries N-linked (GlcNAc...) asparagine glycosylation. O-linked (GalNAc...) threonine glycans are attached at residues Thr428, Thr469, Thr471, Thr473, and Thr475. Asn558 carries N-linked (GlcNAc...) asparagine glycosylation. O-linked (GalNAc...) threonine glycosylation is found at Thr562, Thr576, Thr578, and Thr580. 2 cysteine pairs are disulfide-bonded: Cys603/Cys687 and Cys685/Cys694. Residue Asn681 is glycosylated (N-linked (GlcNAc...) asparagine). Residues Leu704–Leu728 form a helical membrane-spanning segment. At Lys729–Glu880 the chain is on the cytoplasmic side. Residues Pro790–Ser826 are disordered.

As to quaternary structure, interacts with CTNNB1.

It is found in the cell membrane. In terms of biological role, cadherins are calcium-dependent cell adhesion proteins. They preferentially interact with themselves in a homophilic manner in connecting cells; cadherins may thus contribute to the sorting of heterogeneous cell types. The protein is EP-cadherin of Xenopus laevis (African clawed frog).